Reading from the N-terminus, the 316-residue chain is Ribosomal RNA small subunit methyltransferase H (316 aa).

S-adenosyl-L-methionine contacts are provided by residues 35–37 (GGH), Asp55, Tyr79, Asp100, and Gln107.

It belongs to the methyltransferase superfamily. RsmH family.

The protein resides in the cytoplasm. The enzyme catalyses cytidine(1402) in 16S rRNA + S-adenosyl-L-methionine = N(4)-methylcytidine(1402) in 16S rRNA + S-adenosyl-L-homocysteine + H(+). Functionally, specifically methylates the N4 position of cytidine in position 1402 (C1402) of 16S rRNA. This is Ribosomal RNA small subunit methyltransferase H from Nitrosospira multiformis (strain ATCC 25196 / NCIMB 11849 / C 71).